The sequence spans 285 residues: Probable adenylate kinase 6, chloroplastic (285 aa).

Residues 1–33 constitute a chloroplast transit peptide; it reads MAAISRAIRACAAAGSRRSMASSAKEVAAAGAR. 63 to 68 lines the ATP pocket; the sequence is GVGKGT. The NMP stretch occupies residues 83-112; it reads ATGDLVRDALASPGPFSEQLAEIVNNGKLV. Residues Thr84, Arg89, 110-112, 140-143, and Gln147 each bind AMP; these read KLV and GFPR. Positions 176–224 are LID; it reads GRRMCSQCGGNFNVASIDMEGENGGPRMYMPPLLPPPQCESKLITRPDD. ATP-binding positions include Arg177 and 186-187; that span reads NF. Arg221 and Arg232 together coordinate AMP.

It belongs to the adenylate kinase family.

It is found in the plastid. It localises to the chloroplast. The catalysed reaction is AMP + ATP = 2 ADP. Catalyzes the reversible transfer of the terminal phosphate group between ATP and AMP. Plays an important role in cellular energy homeostasis and in adenine nucleotide metabolism. This chain is Probable adenylate kinase 6, chloroplastic, found in Oryza sativa subsp. japonica (Rice).